The primary structure comprises 307 residues: Type 2A encapsulin shell protein (307 aa).

The protein belongs to the encapsulin family. Family 2A subfamily. Homooligomeric. The encapsulin nanocompartment is formed by 60 subunits; monomers form pentamers which assemble to form shells. There are 12 charged pores where the pentamers meet as well as 3-fold axis channels and dimer channels. In terms of processing, the N-terminus is blocked.

The protein resides in the encapsulin nanocompartment. It is found in the cytoplasm. Its subcellular location is the cytosol. It localises to the cell membrane. Shell component of a type 2A encapsulin nanocompartment. Forms encapsulin nanocompartments about 24 nm in diameter from 60 monomers. Probably encapsulates at least cysteine desulfurase (CyD, AC O32975) and allows passage of cysteine into its interior, probably involved in sulfur metabolism. Expression in M.smegmatis generates a multimeric protein, whereas expression in E.coli does not. This chain is Type 2A encapsulin shell protein, found in Mycobacterium leprae (strain TN).